A 234-amino-acid chain; its full sequence is Glucosamine-6-phosphate deaminase (234 aa).

Catalysis depends on Asp-62, which acts as the Proton acceptor; for enolization step. Asn-128 acts as the For ring-opening step in catalysis. The Proton acceptor; for ring-opening step role is filled by His-130. Glu-135 functions as the For ring-opening step in the catalytic mechanism.

The protein belongs to the glucosamine/galactosamine-6-phosphate isomerase family. NagB subfamily.

The catalysed reaction is alpha-D-glucosamine 6-phosphate + H2O = beta-D-fructose 6-phosphate + NH4(+). Its pathway is amino-sugar metabolism; N-acetylneuraminate degradation; D-fructose 6-phosphate from N-acetylneuraminate: step 5/5. Functionally, catalyzes the reversible isomerization-deamination of glucosamine 6-phosphate (GlcN6P) to form fructose 6-phosphate (Fru6P) and ammonium ion. This is Glucosamine-6-phosphate deaminase from Streptococcus pyogenes serotype M3 (strain ATCC BAA-595 / MGAS315).